The following is a 456-amino-acid chain: tRNA modification GTPase MnmE (456 aa).

(6S)-5-formyl-5,6,7,8-tetrahydrofolate-binding residues include arginine 24, glutamate 81, and lysine 120. Residues 216–379 enclose the TrmE-type G domain; it reads GMTVVIAGRP…LRDHLKACMG (164 aa). Asparagine 226 lines the K(+) pocket. Residues 226–231, 245–251, 270–273, 335–338, and 359–361 each bind GTP; these read NAGKSS, TDIAGTT, DTAG, NKAD, and SAR. A Mg(2+)-binding site is contributed by serine 230. Residues threonine 245, isoleucine 247, and threonine 250 each coordinate K(+). Threonine 251 contacts Mg(2+). Lysine 456 serves as a coordination point for (6S)-5-formyl-5,6,7,8-tetrahydrofolate.

The protein belongs to the TRAFAC class TrmE-Era-EngA-EngB-Septin-like GTPase superfamily. TrmE GTPase family. Homodimer. Heterotetramer of two MnmE and two MnmG subunits. K(+) serves as cofactor.

It localises to the cytoplasm. In terms of biological role, exhibits a very high intrinsic GTPase hydrolysis rate. Involved in the addition of a carboxymethylaminomethyl (cmnm) group at the wobble position (U34) of certain tRNAs, forming tRNA-cmnm(5)s(2)U34. The protein is tRNA modification GTPase MnmE of Pseudomonas entomophila (strain L48).